Consider the following 411-residue polypeptide: Arginine deiminase (411 aa).

Cysteine 401 (amidino-cysteine intermediate) is an active-site residue.

Belongs to the arginine deiminase family.

It is found in the cytoplasm. It carries out the reaction L-arginine + H2O = L-citrulline + NH4(+). It functions in the pathway amino-acid degradation; L-arginine degradation via ADI pathway; carbamoyl phosphate from L-arginine: step 1/2. In Streptococcus equi subsp. zooepidemicus (strain H70), this protein is Arginine deiminase.